The sequence spans 351 residues: Probable dual-specificity RNA methyltransferase RlmN (351 aa).

Glutamate 97 functions as the Proton acceptor in the catalytic mechanism. Residues 103-337 (YDYGNTVCIS…VTVRKERGVD (235 aa)) form the Radical SAM core domain. The cysteines at positions 110 and 342 are disulfide-linked. Residues cysteine 117, cysteine 121, and cysteine 124 each coordinate [4Fe-4S] cluster. S-adenosyl-L-methionine contacts are provided by residues 166-167 (GE), serine 198, 221-223 (SLH), and asparagine 299. Cysteine 342 functions as the S-methylcysteine intermediate in the catalytic mechanism.

Belongs to the radical SAM superfamily. RlmN family. It depends on [4Fe-4S] cluster as a cofactor.

The protein resides in the cytoplasm. The catalysed reaction is adenosine(2503) in 23S rRNA + 2 reduced [2Fe-2S]-[ferredoxin] + 2 S-adenosyl-L-methionine = 2-methyladenosine(2503) in 23S rRNA + 5'-deoxyadenosine + L-methionine + 2 oxidized [2Fe-2S]-[ferredoxin] + S-adenosyl-L-homocysteine. It carries out the reaction adenosine(37) in tRNA + 2 reduced [2Fe-2S]-[ferredoxin] + 2 S-adenosyl-L-methionine = 2-methyladenosine(37) in tRNA + 5'-deoxyadenosine + L-methionine + 2 oxidized [2Fe-2S]-[ferredoxin] + S-adenosyl-L-homocysteine. Specifically methylates position 2 of adenine 2503 in 23S rRNA and position 2 of adenine 37 in tRNAs. The polypeptide is Probable dual-specificity RNA methyltransferase RlmN (Natranaerobius thermophilus (strain ATCC BAA-1301 / DSM 18059 / JW/NM-WN-LF)).